The primary structure comprises 447 residues: UDP-N-acetylmuramoylalanine--D-glutamate ligase (447 aa).

112 to 118 (GTNGKST) contributes to the ATP binding site.

Belongs to the MurCDEF family.

The protein localises to the cytoplasm. The enzyme catalyses UDP-N-acetyl-alpha-D-muramoyl-L-alanine + D-glutamate + ATP = UDP-N-acetyl-alpha-D-muramoyl-L-alanyl-D-glutamate + ADP + phosphate + H(+). It participates in cell wall biogenesis; peptidoglycan biosynthesis. Its function is as follows. Cell wall formation. Catalyzes the addition of glutamate to the nucleotide precursor UDP-N-acetylmuramoyl-L-alanine (UMA). The chain is UDP-N-acetylmuramoylalanine--D-glutamate ligase from Legionella pneumophila subsp. pneumophila (strain Philadelphia 1 / ATCC 33152 / DSM 7513).